A 331-amino-acid chain; its full sequence is 2-hydroxyacid dehydrogenase homolog (331 aa).

NAD(+) contacts are provided by residues 154-155 (HI), 234-236 (TSR), and aspartate 260. The active site involves arginine 236. Glutamate 265 is a catalytic residue. The active-site Proton donor is histidine 297. 297–300 (HQAF) contacts NAD(+).

It belongs to the D-isomer specific 2-hydroxyacid dehydrogenase family.

This Zymomonas mobilis subsp. mobilis (strain ATCC 31821 / ZM4 / CP4) protein is 2-hydroxyacid dehydrogenase homolog (ddh).